A 407-amino-acid chain; its full sequence is Probable protein S-acyltransferase 9 (407 aa).

The next 2 helical transmembrane spans lie at 28 to 48 (WSIPFTFLLIITPVCFFSVFV) and 62 to 82 (GHVFLVAGVLFTVFVLILLFL). Residues 136-179 (KYCDTCMLYRPPRCSHCSICNNCVERFDHHCPWRNYRYFFMFVS) enclose the DHHC domain. The S-palmitoyl cysteine intermediate role is filled by C166. The next 2 membrane-spanning stretches (helical) occupy residues 174–194 (FFMFVSSATILCIYIFSMSAL) and 217–237 (AVMLMIYCFISLWFVGGLTGF). The disordered stretch occupies residues 300–407 (LATTWERPEE…RSYAAAEEGR (108 aa)). Residues 346–356 (DTAHHKIDIDQ) are compositionally biased toward basic and acidic residues.

The protein belongs to the DHHC palmitoyltransferase family. As to expression, mainly expressed in seeds.

Its subcellular location is the cell membrane. It catalyses the reaction L-cysteinyl-[protein] + hexadecanoyl-CoA = S-hexadecanoyl-L-cysteinyl-[protein] + CoA. Palmitoyl acyltransferase. This chain is Probable protein S-acyltransferase 9 (PAT09), found in Arabidopsis thaliana (Mouse-ear cress).